The following is a 608-amino-acid chain: Protein SHQ1 homolog (608 aa).

2 disordered regions span residues 487–531 and 543–608; these read DAGS…SFYS and IVYE…ASTT. The span at 489–498 shows a compositional bias: low complexity; that stretch reads GSQGSSPQQQ. Acidic residues-rich tracts occupy residues 502–524 and 543–579; these read DDLD…DESV and IVYE…EDDS. A compositionally biased stretch (polar residues) spans 588–608; that stretch reads EAEGNSVIEQCSNSETAASTT.

The protein belongs to the SHQ1 family.

In terms of biological role, required for the quantitative accumulation of H/ACA ribonucleoproteins (RNPs). This is Protein SHQ1 homolog from Drosophila melanogaster (Fruit fly).